We begin with the raw amino-acid sequence, 152 residues long: Peptide deformylase (152 aa).

Residues Cys-91 and His-133 each coordinate Fe cation. Glu-134 is a catalytic residue. His-137 provides a ligand contact to Fe cation.

The protein belongs to the polypeptide deformylase family. Requires Fe(2+) as cofactor.

It catalyses the reaction N-terminal N-formyl-L-methionyl-[peptide] + H2O = N-terminal L-methionyl-[peptide] + formate. Removes the formyl group from the N-terminal Met of newly synthesized proteins. Requires at least a dipeptide for an efficient rate of reaction. N-terminal L-methionine is a prerequisite for activity but the enzyme has broad specificity at other positions. The chain is Peptide deformylase from Wigglesworthia glossinidia brevipalpis.